Reading from the N-terminus, the 526-residue chain is Acetyl-CoA hydrolase (526 aa).

277-281 serves as a coordination point for CoA; it reads GIGNI. Residue Glu302 is the 5-glutamyl coenzyme A thioester intermediate of the active site. 2 residues coordinate CoA: Asn392 and Gly396.

This sequence belongs to the acetyl-CoA hydrolase/transferase family.

It is found in the cytoplasm. The enzyme catalyses acetyl-CoA + H2O = acetate + CoA + H(+). In terms of biological role, presumably involved in regulating the intracellular acetyl-CoA pool for fatty acid and cholesterol synthesis and fatty acid oxidation. This Candida glabrata (strain ATCC 2001 / BCRC 20586 / JCM 3761 / NBRC 0622 / NRRL Y-65 / CBS 138) (Yeast) protein is Acetyl-CoA hydrolase (ACH1).